Here is a 330-residue protein sequence, read N- to C-terminus: Glycerol-3-phosphate dehydrogenase [NAD(P)+] (330 aa).

Positions 14, 15, 35, and 109 each coordinate NADPH. K109 and G137 together coordinate sn-glycerol 3-phosphate. A141 contacts NADPH. Sn-glycerol 3-phosphate-binding residues include K192, D248, S258, R259, and N260. The active-site Proton acceptor is the K192. R259 provides a ligand contact to NADPH. L283 and E285 together coordinate NADPH.

Belongs to the NAD-dependent glycerol-3-phosphate dehydrogenase family.

It is found in the cytoplasm. The catalysed reaction is sn-glycerol 3-phosphate + NAD(+) = dihydroxyacetone phosphate + NADH + H(+). The enzyme catalyses sn-glycerol 3-phosphate + NADP(+) = dihydroxyacetone phosphate + NADPH + H(+). It participates in membrane lipid metabolism; glycerophospholipid metabolism. In terms of biological role, catalyzes the reduction of the glycolytic intermediate dihydroxyacetone phosphate (DHAP) to sn-glycerol 3-phosphate (G3P), the key precursor for phospholipid synthesis. The polypeptide is Glycerol-3-phosphate dehydrogenase [NAD(P)+] (Rickettsia massiliae (strain Mtu5)).